Consider the following 470-residue polypeptide: V-type proton ATPase subunit S1 (470 aa).

Residues 1-41 form the signal peptide; the sequence is MMAAMATARVRMGPRCAQALWRMPWLPVFLSLAAAAAAAAA. Residues 42-231 constitute a propeptide that is removed on maturation; the sequence is EQQVPLVLWS…TAVRPSRVAR (190 aa). Over 42-419 the chain is Lumenal; sequence EQQVPLVLWS…EQFSYASDCA (378 aa). Residues Asn170, Asn261, Asn273, Asn296, Asn303, Asn350, and Asn357 are each glycosylated (N-linked (GlcNAc...) asparagine). Cys371 and Cys418 are oxidised to a cystine. The chain crosses the membrane as a helical span at residues 420-440; it reads SFFSPGIWMGLLTSLFMLFIF. The Cytoplasmic portion of the chain corresponds to 441-470; that stretch reads TYGLHMILSLKTMDRFDDHKGPTISLTQIV. Ser465 is subject to Phosphoserine.

The protein belongs to the vacuolar ATPase subunit S1 family. As to quaternary structure, accessory component of the multisubunit proton-transporting vacuolar (V)-ATPase protein pump. Interacts (via N-terminus) with ATP6AP2 (via N-terminus). Interacts with RNASEK. Interacts with TMEM106B (via C-terminus). In terms of processing, N-glycosylated. Widely expressed, with highest levels in brain and lowest in liver and duodenum.

The protein localises to the endoplasmic reticulum membrane. It localises to the endoplasmic reticulum-Golgi intermediate compartment membrane. Its subcellular location is the cytoplasmic vesicle. The protein resides in the secretory vesicle. It is found in the synaptic vesicle membrane. The protein localises to the clathrin-coated vesicle membrane. Accessory subunit of the proton-transporting vacuolar (V)-ATPase protein pump, which is required for luminal acidification of secretory vesicles. Guides the V-type ATPase into specialized subcellular compartments, such as neuroendocrine regulated secretory vesicles or the ruffled border of the osteoclast, thereby regulating its activity. Involved in membrane trafficking and Ca(2+)-dependent membrane fusion. May play a role in the assembly of the V-type ATPase complex. In aerobic conditions, involved in intracellular iron homeostasis, thus triggering the activity of Fe(2+) prolyl hydroxylase (PHD) enzymes, and leading to HIF1A hydroxylation and subsequent proteasomal degradation. In islets of Langerhans cells, may regulate the acidification of dense-core secretory granules. The chain is V-type proton ATPase subunit S1 (ATP6AP1) from Homo sapiens (Human).